The primary structure comprises 515 residues: Bifunctional purine biosynthesis protein PurH (515 aa).

One can recognise an MGS-like domain in the interval 1-145 (MTKRVLISVS…KNHASVTVVV (145 aa)).

This sequence belongs to the PurH family.

It catalyses the reaction (6R)-10-formyltetrahydrofolate + 5-amino-1-(5-phospho-beta-D-ribosyl)imidazole-4-carboxamide = 5-formamido-1-(5-phospho-D-ribosyl)imidazole-4-carboxamide + (6S)-5,6,7,8-tetrahydrofolate. The catalysed reaction is IMP + H2O = 5-formamido-1-(5-phospho-D-ribosyl)imidazole-4-carboxamide. It participates in purine metabolism; IMP biosynthesis via de novo pathway; 5-formamido-1-(5-phospho-D-ribosyl)imidazole-4-carboxamide from 5-amino-1-(5-phospho-D-ribosyl)imidazole-4-carboxamide (10-formyl THF route): step 1/1. It functions in the pathway purine metabolism; IMP biosynthesis via de novo pathway; IMP from 5-formamido-1-(5-phospho-D-ribosyl)imidazole-4-carboxamide: step 1/1. This Streptococcus pneumoniae serotype 19F (strain G54) protein is Bifunctional purine biosynthesis protein PurH.